A 155-amino-acid chain; its full sequence is SsrA-binding protein (155 aa).

This sequence belongs to the SmpB family.

The protein localises to the cytoplasm. In terms of biological role, required for rescue of stalled ribosomes mediated by trans-translation. Binds to transfer-messenger RNA (tmRNA), required for stable association of tmRNA with ribosomes. tmRNA and SmpB together mimic tRNA shape, replacing the anticodon stem-loop with SmpB. tmRNA is encoded by the ssrA gene; the 2 termini fold to resemble tRNA(Ala) and it encodes a 'tag peptide', a short internal open reading frame. During trans-translation Ala-aminoacylated tmRNA acts like a tRNA, entering the A-site of stalled ribosomes, displacing the stalled mRNA. The ribosome then switches to translate the ORF on the tmRNA; the nascent peptide is terminated with the 'tag peptide' encoded by the tmRNA and targeted for degradation. The ribosome is freed to recommence translation, which seems to be the essential function of trans-translation. In Chelativorans sp. (strain BNC1), this protein is SsrA-binding protein.